Reading from the N-terminus, the 861-residue chain is Interleukin-12 receptor subunit beta-2 (861 aa).

The first 23 residues, 1–23, serve as a signal peptide directing secretion; it reads MARTVCGCSWALIFIIMSLLVKA. At 24–622 the chain is on the extracellular side; the sequence is KIDVCKRGDV…REFCLQGKAN (599 aa). 4 N-linked (GlcNAc...) asparagine glycosylation sites follow: asparagine 48, asparagine 129, asparagine 166, and asparagine 271. Fibronectin type-III domains lie at 126–224, 226–317, 318–415, 423–520, and 521–620; these read QPQN…VVRP, PPWD…TQTP, EKEP…NIAD, APQQ…KHKA, and PLSG…LQGK. Positions 305-309 match the WSXWS motif motif; it reads WSDWS. Asparagine 347, asparagine 376, and asparagine 480 each carry an N-linked (GlcNAc...) asparagine glycan. The helical transmembrane segment at 623-643 threads the bilayer; sequence WSTFVAPSICIAVITVGVFSM. The Cytoplasmic segment spans residues 644-861; the sequence is RCFRQKVFVL…LKMGCGSLML (218 aa). Positions 662-670 match the Box 1 motif motif; it reads CSREIPDPA. The interval 718–761 is disordered; the sequence is FRRPHHPNWPGKGQRLQGRHASEEDTGSSASSPPPPRALTAETG. Tyrosine 800 bears the Phosphotyrosine mark.

This sequence belongs to the type I cytokine receptor family. Type 2 subfamily. As to quaternary structure, heterodimer/heterooligomer; disulfide-linked. The functional high affinity IL12 receptor is composed of I12RB1 and IL12RB2. Il12RB2 binds JAK2 (via its N-terminal) through a membrane-proximal region of the cytoplasmic domain. Post-translationally, on IL12 stimulation, phosphorylated on C-terminal tyrosine residues.

The protein localises to the membrane. Its function is as follows. Receptor for interleukin-12. This subunit is the signaling component coupling to the JAK2/STAT4 pathway. This Sus scrofa (Pig) protein is Interleukin-12 receptor subunit beta-2 (IL12RB2).